The chain runs to 261 residues: 5-oxoprolinase subunit A (261 aa).

The protein belongs to the LamB/PxpA family. As to quaternary structure, forms a complex composed of PxpA, PxpB and PxpC.

The catalysed reaction is 5-oxo-L-proline + ATP + 2 H2O = L-glutamate + ADP + phosphate + H(+). Functionally, catalyzes the cleavage of 5-oxoproline to form L-glutamate coupled to the hydrolysis of ATP to ADP and inorganic phosphate. In Symbiobacterium thermophilum (strain DSM 24528 / JCM 14929 / IAM 14863 / T), this protein is 5-oxoprolinase subunit A.